The following is a 204-amino-acid chain: Leucyl/phenylalanyl-tRNA--protein transferase (204 aa).

It belongs to the L/F-transferase family.

It localises to the cytoplasm. The catalysed reaction is N-terminal L-lysyl-[protein] + L-leucyl-tRNA(Leu) = N-terminal L-leucyl-L-lysyl-[protein] + tRNA(Leu) + H(+). The enzyme catalyses N-terminal L-arginyl-[protein] + L-leucyl-tRNA(Leu) = N-terminal L-leucyl-L-arginyl-[protein] + tRNA(Leu) + H(+). It carries out the reaction L-phenylalanyl-tRNA(Phe) + an N-terminal L-alpha-aminoacyl-[protein] = an N-terminal L-phenylalanyl-L-alpha-aminoacyl-[protein] + tRNA(Phe). In terms of biological role, functions in the N-end rule pathway of protein degradation where it conjugates Leu, Phe and, less efficiently, Met from aminoacyl-tRNAs to the N-termini of proteins containing an N-terminal arginine or lysine. In Rhizobium johnstonii (strain DSM 114642 / LMG 32736 / 3841) (Rhizobium leguminosarum bv. viciae), this protein is Leucyl/phenylalanyl-tRNA--protein transferase.